We begin with the raw amino-acid sequence, 440 residues long: MTRPCDILIQAACIVTQDAMRTVVEDGALAVADGTVLAVGPREAVTAAHAPARLLDLGNALVMPGLVNAHTHAAMTFLRGVADDLPLMDWLTQHIFPVEKHLTPDIVEAGALLGCAEMLRTGTTAFNDMYLIQDATYRAVDTAGLRCLGGEGIFGFPSPAYPDADAGLDLVRRLHETWRHNPRIRQCVTPHAVYTTSPELLQRCQALAEELDLPLHIHLAETTTETAQCQQMFGQRPVPYCHGLGLLTPRATVAHAVDLTDDEMDLLASTGAAVAHNPESNMKLASGAAPVPQMLARGIAVGIGTDGAASNNSLNMFTEMTSCAMLHKLRCMDPTCAPAQTVLDMATLGGAAALHWPGLGQLAPGCPADLTVLDLSAPNLQPMYNPASHLVYAATGHEVRLTMVAGEVLYQDGRFTRFDYPALMAQMRDVRRWVLDKLGR.

Residues His70 and His72 each contribute to the Zn(2+) site. Positions 99 and 191 each coordinate substrate. His218 serves as a coordination point for Zn(2+). Substrate is bound by residues Glu221 and Asp306. Asp306 is a Zn(2+) binding site.

The protein belongs to the metallo-dependent hydrolases superfamily. MTA/SAH deaminase family. Zn(2+) serves as cofactor.

The enzyme catalyses S-adenosyl-L-homocysteine + H2O + H(+) = S-inosyl-L-homocysteine + NH4(+). It catalyses the reaction S-methyl-5'-thioadenosine + H2O + H(+) = S-methyl-5'-thioinosine + NH4(+). In terms of biological role, catalyzes the deamination of 5-methylthioadenosine and S-adenosyl-L-homocysteine into 5-methylthioinosine and S-inosyl-L-homocysteine, respectively. Is also able to deaminate adenosine. This chain is 5-methylthioadenosine/S-adenosylhomocysteine deaminase, found in Nitratidesulfovibrio vulgaris (strain DSM 19637 / Miyazaki F) (Desulfovibrio vulgaris).